We begin with the raw amino-acid sequence, 282 residues long: MTIQWFPGHMAKARREVTEKLKLIDIVYELVDARIPMSSRNPMIEDILKNKPRIMLLNKADKADAAVTQQWKEHFENQGIRSLSINSVNGQGLNQIVPASKEILQEKFDRMRAKGVKPRAIRALIIGIPNVGKSTLINRLAKKNIAKTGDRPGITTSQQWVKVGKELELLDTPGILWPKFEDELVGLRLAVTGAIKDSIINLQDVAVFGLRFLEEHYPERLKERYALDEIPEDIAELFDAIGEKRGCLMSGGLINYDKTTEVIIRDIRTEKFGRLSFEQPTM.

A CP-type G domain is found at 14–178; sequence RREVTEKLKL…LLDTPGILWP (165 aa). Residues 58–61, 86–87, 130–135, and glycine 174 each bind GTP; these read NKAD, NS, and NVGKST.

Belongs to the TRAFAC class YlqF/YawG GTPase family. MTG1 subfamily. In terms of assembly, interacts with ctc. Interacts with the immature 50S ribosome subunit. 2 molecules of rbgA bind to one 50S subunit.

Its subcellular location is the cytoplasm. Functionally, essential protein that is required for a late step of 50S ribosomal subunit assembly. Has GTPase activity that is stimulated by interaction with the immature 50S ribosome subunit. Binds to the 23S rRNA. Required for the association of ribosomal proteins rplP and rpmA with the large subunit. This is Ribosome biogenesis GTPase A (rbgA) from Bacillus spizizenii (strain ATCC 23059 / NRRL B-14472 / W23) (Bacillus subtilis subsp. spizizenii).